Reading from the N-terminus, the 270-residue chain is uncharacterized protein (270 aa).

Residues 1-22 form the signal peptide; it reads MEYIKKIALYMSVLLLIIFIGG. Cys-23 is lipidated: N-palmitoyl cysteine. The S-diacylglycerol cysteine moiety is linked to residue Cys-23.

The protein belongs to the staphylococcal tandem lipoprotein family.

The protein localises to the cell membrane. This is an uncharacterized protein from Staphylococcus aureus (strain NCTC 8325 / PS 47).